Reading from the N-terminus, the 318-residue chain is Transaldolase (318 aa).

Residue Lys-132 is the Schiff-base intermediate with substrate of the active site.

The protein belongs to the transaldolase family. Type 1 subfamily. Homodimer.

The protein resides in the cytoplasm. It catalyses the reaction D-sedoheptulose 7-phosphate + D-glyceraldehyde 3-phosphate = D-erythrose 4-phosphate + beta-D-fructose 6-phosphate. Its pathway is carbohydrate degradation; pentose phosphate pathway; D-glyceraldehyde 3-phosphate and beta-D-fructose 6-phosphate from D-ribose 5-phosphate and D-xylulose 5-phosphate (non-oxidative stage): step 2/3. In terms of biological role, transaldolase is important for the balance of metabolites in the pentose-phosphate pathway. This chain is Transaldolase, found in Shewanella baltica (strain OS223).